The sequence spans 1516 residues: EF-hand calcium-binding domain-containing protein 6 (1516 aa).

Residues 1–23 (MKRNGTRLNFAKANSTKSGSTRA) form a disordered region. Polar residues predominate over residues 12 to 21 (KANSTKSGST). EF-hand domains follow at residues 96 to 131 (SRRD…FLIP), 197 to 232 (RNMR…FCLR), 321 to 356 (KSYE…FIYR), 444 to 462 (SGHI…MVAK), and 528 to 563 (RNLQ…FCPY). Asp-109, Asn-111, Asn-113, Met-115, Asp-120, Asp-210, Asn-212, Thr-214, and Glu-221 together coordinate Ca(2+). The segment at 618–638 (EEPGQQDERTQPSGEKTSEIN) is disordered. A compositionally biased stretch (polar residues) spans 628 to 638 (QPSGEKTSEIN). EF-hand domains are found at residues 674–690 (KINQ…SGMP), 763–798 (ESFR…LQLN), 905–940 (LTPR…RYSP), 1086–1121 (SSQP…VCQK), 1193–1228 (SHYH…HIQI), and 1229–1264 (LTDE…ERVP). Positions 776, 778, 780, and 787 each coordinate Ca(2+). Thr-906 is subject to Phosphothreonine. Residues 1263–1318 (VPSPPMAAGDSGESTMAQRGSSAPEFSQGTRSNLYSPPRDSRVGLKSRSHPCTPVG) form a disordered region. Ser-1265 is subject to Phosphoserine. Polar residues predominate over residues 1274–1297 (GESTMAQRGSSAPEFSQGTRSNLY). Ser-1311 bears the Phosphoserine mark. 2 positions are modified to phosphothreonine: Thr-1315 and Thr-1319. The tract at residues 1318 to 1516 (GTPPLQNCEP…YNDFLRAFLQ (199 aa)) is interaction with PARK7. EF-hand domains are found at residues 1348-1373 (KEKD…FKLD), 1374-1409 (ISRE…LLKA), 1454-1484 (MRRS…YSIN), and 1485-1516 (LSEE…AFLQ). Positions 1422–1516 (NADKMKEAGM…YNDFLRAFLQ (95 aa)) are interaction with AR. Positions 1462, 1464, 1466, and 1473 each coordinate Ca(2+).

Microtubule inner protein component of sperm flagellar doublet microtubules. Binds PARK7. Part of a ternary complex containing PARK7, EFCAB6/DJBP and AR.

It is found in the nucleus. Its subcellular location is the cytoplasm. The protein resides in the cytoskeleton. It localises to the flagellum axoneme. In terms of biological role, negatively regulates the androgen receptor by recruiting histone deacetylase complex, and protein DJ-1 antagonizes this inhibition by abrogation of this complex. Microtubule inner protein (MIP) part of the dynein-decorated doublet microtubules (DMTs) in cilia axoneme, which is required for motile cilia beating. The protein is EF-hand calcium-binding domain-containing protein 6 (Efcab6) of Mus musculus (Mouse).